A 163-amino-acid chain; its full sequence is 2-C-methyl-D-erythritol 2,4-cyclodiphosphate synthase (163 aa).

A divalent metal cation is bound by residues Asp-10 and His-12. Residues 10–12 (DVH) and 36–37 (HS) contribute to the 4-CDP-2-C-methyl-D-erythritol 2-phosphate site. An a divalent metal cation-binding site is contributed by His-44. Residues 58-60 (DIG), 63-67 (FPDND), 134-137 (TTTE), Phe-141, and Arg-144 contribute to the 4-CDP-2-C-methyl-D-erythritol 2-phosphate site.

Belongs to the IspF family. Homotrimer. Requires a divalent metal cation as cofactor.

It catalyses the reaction 4-CDP-2-C-methyl-D-erythritol 2-phosphate = 2-C-methyl-D-erythritol 2,4-cyclic diphosphate + CMP. It functions in the pathway isoprenoid biosynthesis; isopentenyl diphosphate biosynthesis via DXP pathway; isopentenyl diphosphate from 1-deoxy-D-xylulose 5-phosphate: step 4/6. Involved in the biosynthesis of isopentenyl diphosphate (IPP) and dimethylallyl diphosphate (DMAPP), two major building blocks of isoprenoid compounds. Catalyzes the conversion of 4-diphosphocytidyl-2-C-methyl-D-erythritol 2-phosphate (CDP-ME2P) to 2-C-methyl-D-erythritol 2,4-cyclodiphosphate (ME-CPP) with a corresponding release of cytidine 5-monophosphate (CMP). The polypeptide is 2-C-methyl-D-erythritol 2,4-cyclodiphosphate synthase (Carboxydothermus hydrogenoformans (strain ATCC BAA-161 / DSM 6008 / Z-2901)).